A 361-amino-acid chain; its full sequence is Chorismate synthase (361 aa).

Arginine 48 and arginine 54 together coordinate NADP(+). FMN is bound by residues 125–127 (RSS), 238–239 (NA), glycine 278, 293–297 (KPTSS), and arginine 319.

The protein belongs to the chorismate synthase family. Homotetramer. Requires FMNH2 as cofactor.

It catalyses the reaction 5-O-(1-carboxyvinyl)-3-phosphoshikimate = chorismate + phosphate. It functions in the pathway metabolic intermediate biosynthesis; chorismate biosynthesis; chorismate from D-erythrose 4-phosphate and phosphoenolpyruvate: step 7/7. In terms of biological role, catalyzes the anti-1,4-elimination of the C-3 phosphate and the C-6 proR hydrogen from 5-enolpyruvylshikimate-3-phosphate (EPSP) to yield chorismate, which is the branch point compound that serves as the starting substrate for the three terminal pathways of aromatic amino acid biosynthesis. This reaction introduces a second double bond into the aromatic ring system. This Vibrio vulnificus (strain YJ016) protein is Chorismate synthase.